The following is a 168-amino-acid chain: 3-isopropylmalate dehydratase small subunit 2 (168 aa).

Belongs to the LeuD family. LeuD type 2 subfamily. As to quaternary structure, heterodimer of LeuC and LeuD.

It catalyses the reaction (2R,3S)-3-isopropylmalate = (2S)-2-isopropylmalate. It participates in amino-acid biosynthesis; L-leucine biosynthesis; L-leucine from 3-methyl-2-oxobutanoate: step 2/4. Catalyzes the isomerization between 2-isopropylmalate and 3-isopropylmalate, via the formation of 2-isopropylmaleate. In Methanopyrus kandleri (strain AV19 / DSM 6324 / JCM 9639 / NBRC 100938), this protein is 3-isopropylmalate dehydratase small subunit 2 (leuD2).